The chain runs to 306 residues: Heterogeneous nuclear ribonucleoproteins C1/C2 (306 aa).

Alanine 2 carries the post-translational modification N-acetylalanine. Residues lysine 8, lysine 50, lysine 89, and lysine 94 each participate in a glycyl lysine isopeptide (Lys-Gly) (interchain with G-Cter in SUMO2) cross-link. Residues 16-87 form the RRM domain; sequence SRVFIGNLNT…QVLDINLAAE (72 aa). Serine 107 and valine 108 each carry phosphoserine. Residue threonine 109 is modified to Phosphothreonine. Residues serine 113, serine 115, and serine 121 each carry the phosphoserine modification. 2 disordered regions span residues 139–190 and 221–306; these read YPAR…KLKG and QSKQ…EDDS. The short motif at 155 to 161 is the Nuclear localization signal element; sequence PSKRQRV. Serine 162 and serine 166 each carry phosphoserine. Positions 175-185 are enriched in low complexity; sequence SKSGQRGSSKS. Position 176 is an N6-acetyllysine; alternate (lysine 176). Lysine 176 is covalently cross-linked (Glycyl lysine isopeptide (Lys-Gly) (interchain with G-Cter in SUMO2); alternate). The stretch at 190–238 forms a coiled coil; sequence GDDLQAIKKELTQIKQKVDSLLENLEKIEKEQSKQAVEMKNDKSEEEQS. The span at 221-232 shows a compositional bias: basic and acidic residues; the sequence is QSKQAVEMKNDK. Residues lysine 223 and lysine 229 each participate in a glycyl lysine isopeptide (Lys-Gly) (interchain with G-Cter in SUMO2) cross-link. Residue lysine 232 forms a Glycyl lysine isopeptide (Lys-Gly) (interchain with G-Cter in SUMO2); alternate linkage. Lysine 232 participates in a covalent cross-link: Glycyl lysine isopeptide (Lys-Gly) (interchain with G-Cter in SUMO1); alternate. Residues serine 233, serine 238, serine 239, and serine 241 each carry the phosphoserine modification. The span at 242–253 shows a compositional bias: basic and acidic residues; the sequence is VKKDETNVKMES. Glycyl lysine isopeptide (Lys-Gly) (interchain with G-Cter in SUMO2) cross-links involve residues lysine 243 and lysine 244. A Glycyl lysine isopeptide (Lys-Gly) (interchain with G-Cter in SUMO2); alternate cross-link involves residue lysine 250. A Glycyl lysine isopeptide (Lys-Gly) (interchain with G-Cter in SUMO); alternate cross-link involves residue lysine 250. A phosphoserine mark is found at serine 253 and serine 260. Residues 255 to 276 are compositionally biased toward acidic residues; that stretch reads GGADDSAEEGDLLDDDDNEDRG. Positions 277–287 are enriched in basic and acidic residues; that stretch reads DDQLELIKDDE. Residues 288–306 are compositionally biased toward acidic residues; it reads KEAEEGEDDRDSANGEDDS. A phosphoserine mark is found at serine 299 and serine 306.

The protein belongs to the RRM HNRPC family. RALY subfamily. As to quaternary structure, tetramer composed of 3 copies of isoform C1 and 1 copy of isoform C2. Assembly of 3 tetramers with bound pre-mRNA gives rise to a 19S complex that interacts with HNRNPA2B1 tetramers. Component of the 40S hnRNP particle. Identified in the spliceosome C complex. Interacts with IGF2BP1. Interacts with DHX9; this interaction is direct, enhanced probably by their concomitant binding to RNA and mediates the attachment to actin filaments. Interacts with PPIA/CYPA. Interacts with YWHAE. Post-translationally, phosphorylated on Ser-260 and Ser-299 in resting cells. Phosphorylated on Ser-253 and on 1 serine residue in the poly-Ser stretch at position 238 in response to hydrogen peroxide. In terms of processing, sumoylated. Sumoylation reduces affinity for mRNA. Ubiquitinated and degraded after nucleo-cytoplasmic transport by YWHAE.

It localises to the nucleus. Binds pre-mRNA and nucleates the assembly of 40S hnRNP particles. Interacts with poly-U tracts in the 3'-UTR or 5'-UTR of mRNA and modulates the stability and the level of translation of bound mRNA molecules. Single HNRNPC tetramers bind 230-240 nucleotides. Trimers of HNRNPC tetramers bind 700 nucleotides. May play a role in the early steps of spliceosome assembly and pre-mRNA splicing. N6-methyladenosine (m6A) has been shown to alter the local structure in mRNAs and long non-coding RNAs (lncRNAs) via a mechanism named 'm(6)A-switch', facilitating binding of HNRNPC, leading to regulation of mRNA splicing. This Homo sapiens (Human) protein is Heterogeneous nuclear ribonucleoproteins C1/C2 (HNRNPC).